An 87-amino-acid polypeptide reads, in one-letter code: MANIKSAKKRAVQSEKRRKHNASRRSMVRTFIKKVYAAIAAGDKDAAQKAFNEMQPIVDRQSCKGLIHKNKAARHKSNLVAQINAMQ.

The disordered stretch occupies residues 1–25 (MANIKSAKKRAVQSEKRRKHNASRR).

Belongs to the bacterial ribosomal protein bS20 family.

Its function is as follows. Binds directly to 16S ribosomal RNA. The sequence is that of Small ribosomal subunit protein bS20 from Yersinia pseudotuberculosis serotype O:1b (strain IP 31758).